Here is a 123-residue protein sequence, read N- to C-terminus: Large ribosomal subunit protein bL12 (123 aa).

The protein belongs to the bacterial ribosomal protein bL12 family. As to quaternary structure, homodimer. Part of the ribosomal stalk of the 50S ribosomal subunit. Forms a multimeric L10(L12)X complex, where L10 forms an elongated spine to which 2 to 4 L12 dimers bind in a sequential fashion. Binds GTP-bound translation factors.

Its function is as follows. Forms part of the ribosomal stalk which helps the ribosome interact with GTP-bound translation factors. Is thus essential for accurate translation. The protein is Large ribosomal subunit protein bL12 of Neisseria meningitidis serogroup C (strain 053442).